Reading from the N-terminus, the 52-residue chain is Phospholamban (52 aa).

Met1 carries the post-translational modification N-acetylmethionine. Residues 1-31 (MEKVQYLTRSAIRRASTIEMPQQARQNLQNL) are Cytoplasmic-facing. Phosphoserine; by PKA is present on Ser16. The residue at position 17 (Thr17) is a Phosphothreonine; by CaMK2. Residues 32–52 (FINFCLILICLLLICIIVMLL) form a helical membrane-spanning segment. A lipid anchor (S-palmitoyl cysteine) is attached at Cys36.

The protein belongs to the phospholamban family. In terms of assembly, homopentamer. Can also form heterooligomers with other sarcoplasmic/endoplasmic reticulum calcium ATPase (SERCA) regulators ARLN, ERLN, SLN and STRIT1/DWORF. Monomer. Interacts with HAX1. Interacts as a monomer with ATP2A2; the interaction decreases ATP2A2 Ca(2+) affinity. Interacts with VMP1; VMP1 competes with PLN and SLN to prevent them from forming an inhibitory complex with ATP2A2. Interacts with S100A1 in a Ca(2+)-dependent manner. Post-translationally, phosphorylated at Thr-17 by CaMK2, and in response to beta-adrenergic stimulation. Phosphorylation by DMPK may stimulate sarcoplasmic reticulum calcium uptake in cardiomyocytes. Phosphorylation by PKA abolishes the inhibition of ATP2A2-mediated calcium uptake. In terms of processing, palmitoylated by ZDHHC16, promoting formation of the homopentamer. In elongated spermatids, proteolytically cleaved by SPPL2C which modulates intracellular Ca(2+) homeostasis. Expressed in testis (at protein level). In brain, expressed specifically in GABAergic GAD67+ neurons of the thalamic reticular nucleus where it colocalizes with ATP2A2/SERCA2 (at protein level). Expressed in the bladder and in the atria and ventricles of the heart.

The protein resides in the endoplasmic reticulum membrane. Its subcellular location is the sarcoplasmic reticulum membrane. It is found in the mitochondrion membrane. It localises to the membrane. In terms of biological role, reversibly inhibits the activity of ATP2A2/SERCA2 in cardiac sarcoplasmic reticulum by decreasing the apparent affinity of the ATPase for Ca(2+). Binds preferentially to the ATP-bound E1 conformational form of ATP2A2 which predominates at low Ca(2+) concentrations during the diastolic phase of the cardiac cycle. Inhibits ATP2A2 Ca(2+) affinity by disrupting its allosteric activation by ATP. Modulates the contractility of the heart muscle in response to physiological stimuli via its effects on ATP2A2. Modulates calcium re-uptake during muscle relaxation and plays an important role in calcium homeostasis in the heart muscle. The degree of ATP2A2 inhibition depends on the oligomeric state of PLN. ATP2A2 inhibition is alleviated by PLN phosphorylation. Also inhibits the activity of ATP2A3/SERCA3. Controls intracellular Ca(2+) levels in elongated spermatids and may play a role in germ cell differentiation. In the thalamic reticular nucleus of the brain, plays a role in the regulation of sleep patterns and executive functioning. In Mus musculus (Mouse), this protein is Phospholamban.